The sequence spans 398 residues: Dual-specificity RNA methyltransferase RlmN (398 aa).

The active-site Proton acceptor is Glu-119. Residues 125 to 364 (EADRATLCVS…TIVRKTRGDD (240 aa)) form the Radical SAM core domain. Cys-132 and Cys-369 are oxidised to a cystine. Residues Cys-139, Cys-143, and Cys-146 each contribute to the [4Fe-4S] cluster site. S-adenosyl-L-methionine contacts are provided by residues 193–194 (GE), Ser-225, 247–249 (SLH), and Asn-326. The active-site S-methylcysteine intermediate is Cys-369.

The protein belongs to the radical SAM superfamily. RlmN family. [4Fe-4S] cluster is required as a cofactor.

Its subcellular location is the cytoplasm. The enzyme catalyses adenosine(2503) in 23S rRNA + 2 reduced [2Fe-2S]-[ferredoxin] + 2 S-adenosyl-L-methionine = 2-methyladenosine(2503) in 23S rRNA + 5'-deoxyadenosine + L-methionine + 2 oxidized [2Fe-2S]-[ferredoxin] + S-adenosyl-L-homocysteine. It catalyses the reaction adenosine(37) in tRNA + 2 reduced [2Fe-2S]-[ferredoxin] + 2 S-adenosyl-L-methionine = 2-methyladenosine(37) in tRNA + 5'-deoxyadenosine + L-methionine + 2 oxidized [2Fe-2S]-[ferredoxin] + S-adenosyl-L-homocysteine. Functionally, specifically methylates position 2 of adenine 2503 in 23S rRNA and position 2 of adenine 37 in tRNAs. m2A2503 modification seems to play a crucial role in the proofreading step occurring at the peptidyl transferase center and thus would serve to optimize ribosomal fidelity. The protein is Dual-specificity RNA methyltransferase RlmN of Yersinia pestis.